A 295-amino-acid chain; its full sequence is Cell shape-determining protein MreC (295 aa).

Positions 1-34 (MPQFFLNKRLIILLISIIVLVALVGFSLRDRENA) are cleaved as a signal peptide. Positions 66–112 (VVDLKNTYTENQHLKERLEELAQLESEVADLKKENKDLKESLDITDS) form a coiled coil. A disordered region spans residues 276–295 (SAEAGTTDDDTTSSDTTGGQ).

The protein belongs to the MreC family. Homooligomer of 24 subunits, arranged as 12 dimers.

Involved in formation and maintenance of cell shape. The chain is Cell shape-determining protein MreC from Listeria monocytogenes serovar 1/2a (strain ATCC BAA-679 / EGD-e).